The following is a 317-amino-acid chain: Testis-specific Y-encoded protein 1 (317 aa).

Disordered stretches follow at residues 1-39 and 91-118; these read MSRP…FQVV and DEEQ…PGGP. Composition is skewed to basic and acidic residues over residues 15-26 and 95-112; these read QGQEERERRSEE and EQRP…EQGQ.

The protein belongs to the nucleosome assembly protein (NAP) family. Phosphorylated. Testis. Probably in spermatogonia.

The protein localises to the cytoplasm. It is found in the nucleus. May be involved in sperm differentiation and proliferation. This is Testis-specific Y-encoded protein 1 (TSPY1) from Bos taurus (Bovine).